The primary structure comprises 98 residues: NADH-ubiquinone oxidoreductase chain 4L (98 aa).

3 helical membrane passes run 1 to 21, 29 to 49, and 61 to 81; these read MTLIHMNIIMAFSMSLVGLLM, ALLCLEGMMLSLFVLAALTIL, and IILLVFAACEAAIGLALLVTI.

This sequence belongs to the complex I subunit 4L family. As to quaternary structure, core subunit of respiratory chain NADH dehydrogenase (Complex I) which is composed of 45 different subunits.

It is found in the mitochondrion inner membrane. The enzyme catalyses a ubiquinone + NADH + 5 H(+)(in) = a ubiquinol + NAD(+) + 4 H(+)(out). Its function is as follows. Core subunit of the mitochondrial membrane respiratory chain NADH dehydrogenase (Complex I) which catalyzes electron transfer from NADH through the respiratory chain, using ubiquinone as an electron acceptor. Part of the enzyme membrane arm which is embedded in the lipid bilayer and involved in proton translocation. This chain is NADH-ubiquinone oxidoreductase chain 4L (MT-ND4L), found in Eubalaena australis (Southern right whale).